A 421-amino-acid chain; its full sequence is Odorant receptor 67b (421 aa).

The Cytoplasmic portion of the chain corresponds to 1 to 48; it reads MQDQLDHELERIDKLPKLGLLWVEYSAYALGVNIAPRKRSSKYCRLTR. The chain crosses the membrane as a helical span at residues 49–69; sequence ILVLIVNLSIIYSLVAFIMEN. The Extracellular segment spans residues 70–71; that stretch reads YM. Residues 72 to 92 traverse the membrane as a helical segment; it reads ISFETYVEAVLLTFQLSVGVV. Residues 93–151 lie on the Cytoplasmic side of the membrane; sequence KMFHFQNKVESCSQLVFSTETGEVLKSLGLFQLDLPRKKELLSSVSLILLNNWMIIDRQ. The helical transmembrane segment at 152 to 172 threads the bilayer; sequence VMFFFKIVCMPVLYYCVRPYF. Residues 173 to 217 lie on the Extracellular side of the membrane; sequence QYIFDCYIKDKDTCEMTLTYPAIVPYLQLGNYEFPSYVIRFFLLQ. Residues 218–238 form a helical membrane-spanning segment; sequence SGPLWCFFAVFGFNSLFVVLT. Residues 239 to 289 lie on the Cytoplasmic side of the membrane; it reads RYESGLIKVLRFLVQNSTSDILVPKDQRVKYLQCCVRLFARISSHHNQIEN. The helical transmembrane segment at 290–310 threads the bilayer; the sequence is LFKYIILVQCSVSSILICMLL. At 311-315 the chain is on the extracellular side; sequence YKIST. The chain crosses the membrane as a helical span at residues 316 to 336; sequence VLEVGWVWMGMIMVYFVTIAL. Over 337–384 the chain is Cytoplasmic; that stretch reads EITLYNVSAQKVESQSELLFHDWYNCSWYNESREFKFMIKMMLLFSRR. Residues 385-405 form a helical membrane-spanning segment; the sequence is TFVLSVGGFTSLSHKFLVQVF. The Extracellular portion of the chain corresponds to 406 to 421; it reads RLSANFFLLLRNMNNK.

It belongs to the insect chemoreceptor superfamily. Heteromeric odorant receptor channel (TC 1.A.69) family. Or63a subfamily. As to quaternary structure, interacts with Orco. Complexes exist early in the endomembrane system in olfactory sensory neurons (OSNs), coupling these complexes to the conserved ciliary trafficking pathway.

It is found in the cell membrane. Functionally, odorant receptor which mediates acceptance or avoidance behavior, depending on its substrates. The odorant receptor repertoire encodes a large collection of odor stimuli that vary widely in identity, intensity, and duration. May form a complex with Orco to form odorant-sensing units, providing sensitive and prolonged odorant signaling and calcium permeability. Involved in the behavioral responses to ethyl acetate, pentyl acetate, methyl caproate, anisole, heptanal, 2-heptanone, r-carvone, nonanoic acid, and pyrazines. This Drosophila melanogaster (Fruit fly) protein is Odorant receptor 67b (Or67b).